A 255-amino-acid chain; its full sequence is Probable pyridoxal 5'-phosphate synthase subunit PDX2 (255 aa).

46–48 (GES) lines the L-glutamine pocket. C78 acts as the Nucleophile in catalysis. L-glutamine is bound by residues R108 and 142–143 (IR). Active-site charge relay system residues include H202 and E204. The tract at residues 225 to 255 (GASSSSSKTIVSVGETSAGPEPAKPDLPIFQ) is disordered.

The protein belongs to the glutaminase PdxT/SNO family. Interacts with PDX1.1 or PDX1.3, but not with PDX1.2. Binds to RPA2A. Strongly expressed in roots, stems, leaves and flowers.

The protein localises to the cytoplasm. The enzyme catalyses aldehydo-D-ribose 5-phosphate + D-glyceraldehyde 3-phosphate + L-glutamine = pyridoxal 5'-phosphate + L-glutamate + phosphate + 3 H2O + H(+). The catalysed reaction is L-glutamine + H2O = L-glutamate + NH4(+). The protein operates within cofactor biosynthesis; pyridoxal 5'-phosphate biosynthesis. Functionally, catalyzes the hydrolysis of glutamine to glutamate and ammonia as part of the biosynthesis of pyridoxal 5'-phosphate. The resulting ammonia molecule is channeled to the active site of PDX1. Involved in the indirect resistance to singlet oxygen-generating photosensitizers. This chain is Probable pyridoxal 5'-phosphate synthase subunit PDX2 (PDX2), found in Arabidopsis thaliana (Mouse-ear cress).